The sequence spans 321 residues: Histidine N-alpha-methyltransferase (321 aa).

Tyrosine 56 lines the L-histidine pocket. S-adenosyl-L-methionine-binding positions include glycine 86, lysine 92, aspartate 113, and 141 to 142; that span reads DF. Residues asparagine 166, tyrosine 206, and 282-284 contribute to the L-histidine site; that span reads EVS.

This sequence belongs to the methyltransferase superfamily. EgtD family. As to quaternary structure, monomer.

It carries out the reaction L-histidine + 3 S-adenosyl-L-methionine = hercynine + 3 S-adenosyl-L-homocysteine + 3 H(+). It functions in the pathway amino-acid biosynthesis; ergothioneine biosynthesis. Its function is as follows. Catalyzes the SAM-dependent triple methylation of the alpha-amino group of histidine to form hercynine, a step in the biosynthesis pathway of ergothioneine. Among all the proteinogenic amino acids, only L-histidine is a substrate. The chain is Histidine N-alpha-methyltransferase from Mycolicibacterium smegmatis (strain ATCC 700084 / mc(2)155) (Mycobacterium smegmatis).